Consider the following 1581-residue polypeptide: MKAQGETEESEKLSKMSSLLERLHAKFNQNRPWSETIKLVRQVMEKRVVMSSGGHQHLVSCLETLQKALKVTSLPAMTDRLESIARQNGLGSHLSASGTECYITSDMFYVEVQLDPAGQLCDVKVAHHGENPVSCLELVQQLREKNFDEFSKHLKGLVNLYNLPGDNKLKTKMYLALQSLEQDLSKMAIMYWKATNAGPLDKILHGSVGYLTPRSGGHLMNLKYYVSPSDLLDDKTASPIILHENNVSRSLGMNASVTIEGTSAMYKLPIAPLIMGSHPVDNKWTPSFSSITSANSVDLPACFFLKFPQPIPVSRAFVQKLQNCTGIPLFETQPTYAPLYELITQFELSKDPDPIPLNHNMRFYAALPGQQHCYFLNKDAPLPDGRSLQGTLISKITFQHPGRVPLILNLIRHQVAYNTLIGSCVKRTILKEDSPGLLQFEVCPLSESRFSVSFQHPVNDSLVCVVMDVQDSTHVSCKLYKGLSDALICTDDFIAKVVQRCMSIPVTMRAIRRKAETIQADTPALSLIAETVEDMVKKNLPPASSPGYGMTTGSNPMSGTTTPTNTFPGGPITTLFNMSMSIKDRHESVGHGEDFSKVSQNPILTSLLQITGNGGSTIGSSPTPPHHTPPPVSSMAGNTKNHPMLMNLLKDNPAQDFSTLYGSSPLERQNSSSGSPRMEICSGSNKTKKKESSRLPPEKPKHQTEDDFQRELFSMDVDSQNPIFDVNMTADTLDTPHITPAPSQCSTPTTYPQPVPHPQPSIQRMVRLSSSDSIGPDVTDILSDIAEEASKLPSTSDDCPAIGTPLRDSSSSGHSQSTLFDSDVFQTNNNENPYTDPADLIADAAGSPSSDSPTNHFFHDGVDFNPDLSNSQSQSGFGEEYFDESSQSGDNDDFKGFASQALNTLGVPMLGGDNGETKFKGNNQADTVDFSIISVAGKALAPADLMEHHSGSQGSLLTTGDLGKEKTQKRVKEGNGTSNSTLSGPGLDSKPGKRSRTPSNDGKSKDKPPKRKKADTEGKSPSHSSSNRPFTPPTSTGGSKSPGSSGRSQTPPGVATPPIPKITIQIPKGTVMVGKPSSHSQYTSSGSVSSSGSKSHHSHSSSSSSSSASTSRKMKSSKSEGSSSSKLSSSMYSSQGSSGSSQSKNSSQSGGKPGSSPITKHGLSSGSSSTKMKPQGKPSSLMNPSLSKPNISPSHSRPPGGSDKLASPMKPVPGTPPSSKAKSPISSGSGGSHMSGTSSSSGMKSSSGLGSSGSLSQKTPPSSNSCTASSSSFSSSGSSMSSSQNQHGSSKGKSPSRNKKPSLTAVIDKLKHGVVTSGPGGEDPLDGQMGVSTNSSSHPMSSKHNMSGGEFQGKREKSDKDKSKVSTSGSSVDSSKKTSESKNVGSTGVAKIIISKHDGGSPSIKAKVTLQKPGESSGEGLRPQMASSKNYGSPLISGSTPKHERGSPSHSKSPAYTPQNLDSESESGSSIAEKSYQNSPSSDDGIRPLPEYSTEKHKKHKKEKKKVKDKDRDRDRDKDRDKKKSHSIKPESWSKSPISSDQSLSMTSNTILSADRPSRLSPDFMIGEEDDDLMDVALIGN.

The segment at 1-670 is interaction with the Mediator complex and THRA; that stretch reads MKAQGETEES…YGSSPLERQN (670 aa). The tract at residues 16–590 is interaction with ESR1; sequence MSSLLERLHA…SIKDRHESVG (575 aa). 2 interaction with the Mediator complex regions span residues 108-212 and 215-390; these read FYVE…GYLT and SGGH…SLQG. The tract at residues 405–644 is interaction with THRA; it reads PLILNLIRHQ…MAGNTKNHPM (240 aa). Residues 542–788 form an interaction with VDR region; sequence PASSPGYGMT…TDILSDIAEE (247 aa). Serine 588 carries the post-translational modification Phosphoserine. The LXXLL motif 1 signature appears at 604 to 608; the sequence is LTSLL. Disordered stretches follow at residues 609–705, 791–819, 868–895, and 947–1566; these read QITG…HQTE, KLPS…QSTL, LSNS…DDFK, and EHHS…DFMI. Pro residues predominate over residues 622 to 632; that stretch reads PTPPHHTPPPV. An interaction with PPARGC1A and THRA region spans residues 622–701; it reads PTPPHHTPPP…SSRLPPEKPK (80 aa). Residues 645–649 carry the LXXLL motif 2 motif; that stretch reads LMNLL. Over residues 655–675 the composition is skewed to polar residues; sequence QDFSTLYGSSPLERQNSSSGS. Positions 656 to 1065 are interaction with ESR1; it reads DFSTLYGSSP…TPPIPKITIQ (410 aa). Serine 664 is modified (phosphoserine). The tract at residues 681–715 is interaction with GATA1; the sequence is CSGSNKTKKKESSRLPPEKPKHQTEDDFQRELFSM. The segment covering 690 to 705 has biased composition (basic and acidic residues); sequence KESSRLPPEKPKHQTE. Serine 794 carries the phosphoserine modification. At threonine 804 the chain carries Phosphothreonine. The span at 807 to 819 shows a compositional bias: polar residues; the sequence is RDSSSSGHSQSTL. Residues 874-901 carry the Integrase domain-binding motif (IBM) motif; the sequence is QSGFGEEYFDESSQSGDNDDFKGFASQA. A phosphoserine mark is found at serine 886 and serine 952. The segment covering 962–973 has biased composition (basic and acidic residues); sequence LGKEKTQKRVKE. Phosphothreonine; by MAPK1 or MAPK3 is present on threonine 1031. The span at 1033–1050 shows a compositional bias: low complexity; it reads PTSTGGSKSPGSSGRSQT. Phosphothreonine occurs at positions 1050 and 1056. Composition is skewed to low complexity over residues 1077–1093, 1100–1111, and 1119–1156; these read SSHS…SSGS, SSSSSSSSASTS, and SEGS…PGSS. Serine 1156 is modified (phosphoserine). Over residues 1162-1195 the composition is skewed to polar residues; that stretch reads GLSSGSSSTKMKPQGKPSSLMNPSLSKPNISPSH. N6-acetyllysine is present on lysine 1177. The residue at position 1207 (serine 1207) is a Phosphoserine. Threonine 1215 is subject to Phosphothreonine. Composition is skewed to low complexity over residues 1218-1227 and 1234-1293; these read SSKAKSPISS and MSGT…SKGK. Serine 1223 bears the Phosphoserine mark. Residues 1249–1421 form an interaction with TP53 region; the sequence is LGSSGSLSQK…KPGESSGEGL (173 aa). Serine 1302 bears the Phosphoserine mark. The segment covering 1330–1345 has biased composition (polar residues); that stretch reads GVSTNSSSHPMSSKHN. A Phosphoserine modification is found at serine 1347. A compositionally biased stretch (basic and acidic residues) spans 1352 to 1364; that stretch reads QGKREKSDKDKSK. Phosphoserine is present on residues serine 1403 and serine 1433. 2 stretches are compositionally biased toward polar residues: residues 1425 to 1440 and 1448 to 1482; these read MASS…SGST and PSHS…SPSS. At threonine 1440 the chain carries Phosphothreonine. Threonine 1457 carries the phosphothreonine; by MAPK1 or MAPK3 modification. Phosphoserine is present on residues serine 1463, serine 1465, serine 1479, serine 1481, and serine 1482. Basic residues predominate over residues 1496–1505; the sequence is KHKKHKKEKK. Positions 1506-1522 are enriched in basic and acidic residues; that stretch reads KVKDKDRDRDRDKDRDK. Lysine 1529 bears the N6-acetyllysine mark. The span at 1533 to 1552 shows a compositional bias: polar residues; the sequence is WSKSPISSDQSLSMTSNTIL.

Belongs to the Mediator complex subunit 1 family. Component of the Mediator complex, which is composed of MED1, MED4, MED6, MED7, MED8, MED9, MED10, MED11, MED12, MED13, MED13L, MED14, MED15, MED16, MED17, MED18, MED19, MED20, MED21, MED22, MED23, MED24, MED25, MED26, MED27, MED29, MED30, MED31, CCNC, CDK8 and CDC2L6/CDK11. The MED12, MED13, CCNC and CDK8 subunits form a distinct module termed the CDK8 module. Mediator containing the CDK8 module is less active than Mediator lacking this module in supporting transcriptional activation. Individual preparations of the Mediator complex lacking one or more distinct subunits have been variously termed ARC, CRSP, DRIP, PC2, SMCC and TRAP. This subunit specifically interacts with a number of nuclear receptors in a ligand-dependent fashion including AR, ESR1, ESR2, PPARA, PPARG, RORA, RXRA, RXRG, THRA, THRB and VDR. Interacts with CTNNB1, GABPA, GLI3, PPARGC1A and TP53. Interacts with GATA1 and YWHAH. Interacts with CLOCK; this interaction requires the presence of THRAP3. Interacts with CCAR1. Interacts with NR4A3. Interacts (via IBM motif) with PSIP1 (via IBD domain); phosphorylation increases its affinity for PSIP1. Interacts with USP22. Post-translationally, phosphorylated by MAPK1 or MAPK3 during G2/M phase which may enhance protein stability and promote entry into the nucleolus. Phosphorylation increases its interaction with PSIP1.

The protein resides in the nucleus. Its function is as follows. Component of the Mediator complex, a coactivator involved in the regulated transcription of nearly all RNA polymerase II-dependent genes. Mediator functions as a bridge to convey information from gene-specific regulatory proteins to the basal RNA polymerase II transcription machinery. Mediator is recruited to promoters by direct interactions with regulatory proteins and serves as a scaffold for the assembly of a functional preinitiation complex with RNA polymerase II and the general transcription factors. Acts as a coactivator for GATA1-mediated transcriptional activation during erythroid differentiation of K562 erythroleukemia cells. This Pongo abelii (Sumatran orangutan) protein is Mediator of RNA polymerase II transcription subunit 1 (MED1).